The sequence spans 90 residues: Large ribosomal subunit protein bL27 (90 aa).

Residues 1-22 (MAHKKAGGSSRNGRDSESKRLG) form a disordered region.

It belongs to the bacterial ribosomal protein bL27 family.

The polypeptide is Large ribosomal subunit protein bL27 (Allorhizobium ampelinum (strain ATCC BAA-846 / DSM 112012 / S4) (Agrobacterium vitis (strain S4))).